The sequence spans 239 residues: Flagellin B3 (239 aa).

Positions 1 to 11 (MLKNFMKNKKG) are excised as a propeptide. N115 and N128 each carry an N-linked (GlcNAc...) asparagine glycan.

This sequence belongs to the archaeal flagellin family. In terms of processing, N-linked glycans consist of the 779 Da trisaccharide beta-ManNAc(Thr)-(1-4)-beta-GlcNAc3NAcA-(1-3)-beta-GlcNAc.

The protein localises to the archaeal flagellum. Its function is as follows. Flagellin is the subunit protein which polymerizes to form the filaments of archaeal flagella. The protein is Flagellin B3 (flaB3) of Methanococcus voltae.